Reading from the N-terminus, the 170-residue chain is Peptide deformylase (170 aa).

Fe cation is bound by residues Cys93 and His135. Residue Glu136 is part of the active site. Fe cation is bound at residue His139.

It belongs to the polypeptide deformylase family. The cofactor is Fe(2+).

The catalysed reaction is N-terminal N-formyl-L-methionyl-[peptide] + H2O = N-terminal L-methionyl-[peptide] + formate. Removes the formyl group from the N-terminal Met of newly synthesized proteins. Requires at least a dipeptide for an efficient rate of reaction. N-terminal L-methionine is a prerequisite for activity but the enzyme has broad specificity at other positions. This chain is Peptide deformylase, found in Syntrophobacter fumaroxidans (strain DSM 10017 / MPOB).